Consider the following 555-residue polypeptide: MATAGAAATDLEVVRGKRAALFFAAVAILLGLPLWWKTTETYRAPLPYSEISGLNALQLRLMVPVTVVFTRDSVPLDDQEKLPFTVVHEREIPLKYKMKIKCRFQKAYRRALEHEEEALSLGSVHEAEALLAEPEKQAEGSLTVYVISEHSSLLPQDMMSYIGPERTAIVRGMIHREAFNIIGRRIIHVAQAMSLTEDVLAAALADHLPEDKWSSDKRRPLKSSLGYEITFSLLNPDPKSHDVHWDIEEGVQRYVQPFLNRLSAAGNFSVDSQILYYAMLGVNPRFDPASSSYSLAMHSLPHVINPVESRLGSSAASLYPVLNFLLYVPELAHSPLYIQDKDGAPVATNAFHSPRWGGIMVYNVDPKIYNASELPVRVEVDMAQVMEVFLAQLRLLFGIAQPQVPPKCLLSGPKSEGLMTWELDRLLWARSVENLATATTTLTSLAQLLGKISNIVIKDDVASEVYRAVAAVQKAAEALALGHLSSAFAASQEAVTSSERAFFDPSLLHLLYFPDDQKFAIYIPLFLPMAVPILLSLVKIFLETHKSWKKPEKID.

Residues 2-18 lie on the Cytoplasmic side of the membrane; it reads ATAGAAATDLEVVRGKR. 2 residues coordinate a cardiolipin: R15 and R18. The helical transmembrane segment at 19-39 threads the bilayer; sequence AALFFAAVAILLGLPLWWKTT. Residues 40 to 517 are Lumenal-facing; that stretch reads ETYRAPLPYS…LHLLYFPDDQ (478 aa). Residues N267 and N370 are each glycosylated (N-linked (GlcNAc...) asparagine). The chain crosses the membrane as a helical span at residues 518–532; it reads KFAIYIPLFLPMAVP. Residues 533-555 are Cytoplasmic-facing; it reads ILLSLVKIFLETHKSWKKPEKID.

This sequence belongs to the PIGS family. As to quaternary structure, heteropentamer. Part of the GPI-anchor transamidase complex, consisting of PIGK, PIGT, PIGS, PIGU and GAA1.

The protein localises to the endoplasmic reticulum membrane. It participates in glycolipid biosynthesis; glycosylphosphatidylinositol-anchor biosynthesis. In terms of biological role, component of the glycosylphosphatidylinositol-anchor (GPI-anchor) transamidase (GPI-T) complex that catalyzes the formation of the linkage between a proprotein and a GPI-anchor and participates in GPI anchored protein biosynthesis. The polypeptide is GPI-anchor transamidase component PIGS (Rattus norvegicus (Rat)).